We begin with the raw amino-acid sequence, 674 residues long: Protein kinase C delta type (674 aa).

The 106-residue stretch at 1–106 (MAPFLRISFN…KNNGKAEFWL (106 aa)) folds into the C2 domain. Threonine 43 and threonine 50 each carry phosphothreonine. The residue at position 64 (tyrosine 64) is a Phosphotyrosine. Residue serine 130 is modified to Phosphoserine. Phosphothreonine is present on threonine 141. Position 155 is a phosphotyrosine (tyrosine 155). A Phorbol-ester/DAG-type 1 zinc finger spans residues 158–208 (NHEFIATFFGQPTFCSVCKEFVWGLNKQGYKCRQCNAAIHKKCIDKIIGRC). A Phosphothreonine modification is found at threonine 218. The segment at 230–280 (PHRFKVYNYMSPTFCDHCGSLLWGLVKQGLKCEDCGMNVHHKCREKVANLC) adopts a Phorbol-ester/DAG-type 2 zinc-finger fold. Serine 299 carries the post-translational modification Phosphoserine; by autocatalysis. 2 positions are modified to phosphotyrosine; by SRC: tyrosine 311 and tyrosine 332. One can recognise a Protein kinase domain in the interval 347 to 601 (FTFQKVLGKG…TGNIRIHPFF (255 aa)). ATP is bound at residue 353–361 (LGKGSFGKV). At tyrosine 372 the chain carries Phosphotyrosine. Residue lysine 376 coordinates ATP. Threonine 449 is modified (phosphothreonine). The Proton acceptor role is filled by aspartate 471. A Phosphoserine modification is found at serine 504. Threonine 505 carries the post-translational modification Phosphothreonine; by autocatalysis. Tyrosine 565 bears the Phosphotyrosine mark. The 72-residue stretch at 602 to 673 (KTINWSLLEK…VNPKFEQFLD (72 aa)) folds into the AGC-kinase C-terminal domain. Residues serine 643, serine 652, and serine 662 each carry the phosphoserine modification.

It belongs to the protein kinase superfamily. AGC Ser/Thr protein kinase family. PKC subfamily. As to quaternary structure, interacts with PDPK1 (via N-terminal region). Interacts with RAD9A. Interacts with CDCP1. Interacts with MUC1. Interacts with VASP. Interacts with CAVIN3. Interacts with PRKD2 (via N-terminus and zing-finger domain 1 and 2) in response to oxidative stress; the interaction is independent of PRKD2 tyrosine phosphorylation. Interacts with PLSC3; interaction is enhanced by UV irradiation. Autophosphorylated and/or phosphorylated at Thr-505, within the activation loop; phosphorylation at Thr-505 is not a prerequisite for enzymatic activity. Autophosphorylated at Ser-299. Upon TNFSF10/TRAIL treatment, phosphorylated at Tyr-155; phosphorylation is required for its translocation to the endoplasmic reticulum and cleavage by caspase-3. Phosphorylated at Tyr-311, Tyr-332 and Tyr-565; phosphorylation of Tyr-311 and Tyr-565 following thrombin or zymosan stimulation potentiates its kinase activity. Phosphorylated by protein kinase PDPK1; phosphorylation is inhibited by the apoptotic C-terminal cleavage product of PKN2. Phosphorylated at Tyr-311 through a SYK and SRC mechanism downstream of C-type lectin receptors activation, promoting its activation. Post-translationally, proteolytically cleaved into a catalytic subunit and a regulatory subunit by caspase-3 during apoptosis which results in kinase activation. In terms of tissue distribution, isoform 1 is highly expressed in developing pro- and pre-B-cells and moderately in mature T-cells. Isoform 2 is highly expressed in testis and ovary and at a lower level in thymocytes, brain and kidney.

The protein resides in the cytoplasm. It is found in the perinuclear region. It localises to the nucleus. The protein localises to the cell membrane. Its subcellular location is the mitochondrion. The protein resides in the endomembrane system. It carries out the reaction L-seryl-[protein] + ATP = O-phospho-L-seryl-[protein] + ADP + H(+). The catalysed reaction is L-threonyl-[protein] + ATP = O-phospho-L-threonyl-[protein] + ADP + H(+). It catalyses the reaction L-tyrosyl-[protein] + ATP = O-phospho-L-tyrosyl-[protein] + ADP + H(+). With respect to regulation, novel PKCs (PRKCD, PRKCE, PRKCH and PRKCQ) are calcium-insensitive, but activated by diacylglycerol (DAG) and phosphatidylserine. Three specific sites; Thr-505 (activation loop of the kinase domain), Ser-643 (turn motif) and Ser-662 (hydrophobic region), need to be phosphorylated for its full activation. Activated by caspase-3 (CASP3) cleavage during apoptosis. After cleavage, the pseudosubstrate motif in the regulatory subunit is released from the substrate recognition site of the catalytic subunit, which enables PRKCD to become constitutively activated. The catalytic subunit which displays properties of a sphingosine-dependent protein kinase is activated by D-erythro-sphingosine (Sph) or N,N-dimethyl-D-erythrosphingosine (DMS) or N,N,N-trimethyl-D-erythrosphingosine (TMS), but not by ceramide or Sph-1-P and is strongly inhibited by phosphatidylserine. Calcium-independent, phospholipid- and diacylglycerol (DAG)-dependent serine/threonine-protein kinase that plays contrasting roles in cell death and cell survival by functioning as a pro-apoptotic protein during DNA damage-induced apoptosis, but acting as an anti-apoptotic protein during cytokine receptor-initiated cell death, is involved in tumor suppression, is required for oxygen radical production by NADPH oxidase and acts as a positive or negative regulator in platelet functional responses. Negatively regulates B cell proliferation and also has an important function in self-antigen induced B cell tolerance induction. Upon DNA damage, activates the promoter of the death-promoting transcription factor BCLAF1/Btf to trigger BCLAF1-mediated p53/TP53 gene transcription and apoptosis. In response to oxidative stress, interact with and activate CHUK/IKKA in the nucleus, causing the phosphorylation of p53/TP53. In the case of ER stress or DNA damage-induced apoptosis, can form a complex with the tyrosine-protein kinase ABL1 which trigger apoptosis independently of p53/TP53. In cytosol can trigger apoptosis by activating MAPK11 or MAPK14, inhibiting AKT1 and decreasing the level of X-linked inhibitor of apoptosis protein (XIAP), whereas in nucleus induces apoptosis via the activation of MAPK8 or MAPK9. Upon ionizing radiation treatment, is required for the activation of the apoptosis regulators BAX and BAK, which trigger the mitochondrial cell death pathway. Can phosphorylate MCL1 and target it for degradation which is sufficient to trigger for BAX activation and apoptosis. Is required for the control of cell cycle progression both at G1/S and G2/M phases. Mediates phorbol 12-myristate 13-acetate (PMA)-induced inhibition of cell cycle progression at G1/S phase by up-regulating the CDK inhibitor CDKN1A/p21 and inhibiting the cyclin CCNA2 promoter activity. In response to UV irradiation can phosphorylate CDK1, which is important for the G2/M DNA damage checkpoint activation. Can protect glioma cells from the apoptosis induced by TNFSF10/TRAIL, probably by inducing increased phosphorylation and subsequent activation of AKT1. Can also act as tumor suppressor upon mitogenic stimulation with PMA or TPA. In N-formyl-methionyl-leucyl-phenylalanine (fMLP)-treated cells, is required for NCF1 (p47-phox) phosphorylation and activation of NADPH oxidase activity, and regulates TNF-elicited superoxide anion production in neutrophils, by direct phosphorylation and activation of NCF1 or indirectly through MAPK1/3 (ERK1/2) signaling pathways. Involved in antifungal immunity by mediating phosphorylation and activation of CARD9 downstream of C-type lectin receptors activation, promoting interaction between CARD9 and BCL10, followed by activation of NF-kappa-B and MAP kinase p38 pathways. May also play a role in the regulation of NADPH oxidase activity in eosinophil after stimulation with IL5, leukotriene B4 or PMA. In collagen-induced platelet aggregation, acts a negative regulator of filopodia formation and actin polymerization by interacting with and negatively regulating VASP phosphorylation. Downstream of PAR1, PAR4 and CD36/GP4 receptors, regulates differentially platelet dense granule secretion; acts as a positive regulator in PAR-mediated granule secretion, whereas it negatively regulates CD36/GP4-mediated granule release. Phosphorylates MUC1 in the C-terminal and regulates the interaction between MUC1 and beta-catenin. The catalytic subunit phosphorylates 14-3-3 proteins (YWHAB, YWHAZ and YWHAH) in a sphingosine-dependent fashion. Phosphorylates ELAVL1 in response to angiotensin-2 treatment. Phosphorylates mitochondrial phospholipid scramblase 3 (PLSCR3), resulting in increased cardiolipin expression on the mitochondrial outer membrane which facilitates apoptosis. Phosphorylates SMPD1 which induces SMPD1 secretion. The protein is Protein kinase C delta type of Mus musculus (Mouse).